The primary structure comprises 299 residues: ATP phosphoribosyltransferase (299 aa).

It belongs to the ATP phosphoribosyltransferase family. Long subfamily. In terms of assembly, equilibrium between an active dimeric form, an inactive hexameric form and higher aggregates. Interconversion between the various forms is largely reversible and is influenced by the natural substrates and inhibitors of the enzyme. Requires Mg(2+) as cofactor.

The protein localises to the cytoplasm. The catalysed reaction is 1-(5-phospho-beta-D-ribosyl)-ATP + diphosphate = 5-phospho-alpha-D-ribose 1-diphosphate + ATP. It participates in amino-acid biosynthesis; L-histidine biosynthesis; L-histidine from 5-phospho-alpha-D-ribose 1-diphosphate: step 1/9. Its activity is regulated as follows. Feedback inhibited by histidine. Catalyzes the condensation of ATP and 5-phosphoribose 1-diphosphate to form N'-(5'-phosphoribosyl)-ATP (PR-ATP). Has a crucial role in the pathway because the rate of histidine biosynthesis seems to be controlled primarily by regulation of HisG enzymatic activity. The chain is ATP phosphoribosyltransferase from Salmonella choleraesuis (strain SC-B67).